The primary structure comprises 110 residues: Snake venom vascular endothelial growth factor toxin (110 aa).

Glutamine 1 is subject to Pyrrolidone carboxylic acid. Intrachain disulfides connect cysteine 14–cysteine 56, cysteine 45–cysteine 91, and cysteine 49–cysteine 93.

It belongs to the PDGF/VEGF growth factor family. Snake venom VEGF subfamily. As to quaternary structure, homodimer; disulfide-linked. Expressed by the venom gland.

Its subcellular location is the secreted. Snake venom VEGFs that may contribute to venom dispersion and prey subjugation by inducing vascular permeability and hypotension. This protein potently stimulates dermal human microvascular endothelial cell (dHMVEC) proliferation in a VEGFR-2 dependent manner. This stimulatory effect is correlated with activation of the MAPK Erk1/2 signaling pathway. It also appears to be a chemoattractant for migration of these cells and stimulates their radial migration in a collagen gel. In vivo, it induces angiogenesis in a Japanese quail assay. This pro-angiogenic effect may also be related to its interaction with VEGFR-2. In addition, it may induce an increase in capillary permeability after intradermal injection, as well as a drastic hypotensive effect after intravenous injection. The hypotension is mediated by nitric oxide (NO), which is produced by VEGF-activated endothelium NO synthase. In Daboia palaestinae (Palestine viper), this protein is Snake venom vascular endothelial growth factor toxin.